Here is a 142-residue protein sequence, read N- to C-terminus: MKTFMANESTIQRKWYVVDAEGKTLGRLATVVASVLKGKHKPTYTPHVDSGDYVIVINAEKIKLTGNKWNDKIYYKHSGYESGLTETPAKELVVKKPTALVEKAVKGMIPHTSLGRDMFRKLFVYAGPEHKHQAQQPESLEV.

It belongs to the universal ribosomal protein uL13 family. As to quaternary structure, part of the 50S ribosomal subunit.

Its function is as follows. This protein is one of the early assembly proteins of the 50S ribosomal subunit, although it is not seen to bind rRNA by itself. It is important during the early stages of 50S assembly. The sequence is that of Large ribosomal subunit protein uL13 from Acholeplasma laidlawii (strain PG-8A).